A 268-amino-acid chain; its full sequence is Tryptophan synthase alpha chain (268 aa).

Residues Glu40 and Asp51 each act as proton acceptor in the active site.

Belongs to the TrpA family. Tetramer of two alpha and two beta chains.

The catalysed reaction is (1S,2R)-1-C-(indol-3-yl)glycerol 3-phosphate + L-serine = D-glyceraldehyde 3-phosphate + L-tryptophan + H2O. It participates in amino-acid biosynthesis; L-tryptophan biosynthesis; L-tryptophan from chorismate: step 5/5. Functionally, the alpha subunit is responsible for the aldol cleavage of indoleglycerol phosphate to indole and glyceraldehyde 3-phosphate. The polypeptide is Tryptophan synthase alpha chain (Geobacillus thermodenitrificans (strain NG80-2)).